A 498-amino-acid polypeptide reads, in one-letter code: Lysine--tRNA ligase (498 aa).

Mg(2+) is bound by residues Glu-409 and Glu-416.

It belongs to the class-II aminoacyl-tRNA synthetase family. In terms of assembly, homodimer. Mg(2+) serves as cofactor.

The protein resides in the cytoplasm. The enzyme catalyses tRNA(Lys) + L-lysine + ATP = L-lysyl-tRNA(Lys) + AMP + diphosphate. The chain is Lysine--tRNA ligase from Dichelobacter nodosus (strain VCS1703A).